The primary structure comprises 642 residues: Medium-chain-fatty-acid--[acyl-carrier-protein] ligase TtuA (642 aa).

The protein belongs to the ATP-dependent AMP-binding enzyme family.

The enzyme catalyses a medium-chain fatty acid + holo-[ACP] + ATP = a medium-chain fatty acyl-[ACP] + AMP + diphosphate. The catalysed reaction is a medium-chain fatty acid + ATP + H(+) = a medium-chain fatty acyl-AMP + diphosphate. It catalyses the reaction a medium-chain fatty acyl-AMP + holo-[ACP] = a medium-chain fatty acyl-[ACP] + AMP + H(+). It carries out the reaction decanoate + holo-[ACP] + ATP = decanoyl-[ACP] + AMP + diphosphate. The enzyme catalyses decanoate + ATP + H(+) = decanoyl-AMP + diphosphate. The catalysed reaction is decanoyl-AMP + holo-[ACP] = decanoyl-[ACP] + AMP + H(+). Ligase likely involved in the biosynthesis of a polyyne metabolite. Catalyzes the activation of decanoic acid, followed by the loading of the activated decanoic acid onto the acyl carrier protein TtuC. Decanoic acid is the preferred substrate, but it can also use 10-undecenoic acid and lauric acid. Nonanoic acid and 7-octenoic acid are only weakly activated. The sequence is that of Medium-chain-fatty-acid--[acyl-carrier-protein] ligase TtuA from Teredinibacter turnerae (strain ATCC 39867 / T7901).